The primary structure comprises 71 residues: Defensin 1 (71 aa).

Positions 1–25 (KTVAGFCIFFLVLFLAQEGVVKTEA) are cleaved as a signal peptide. Intrachain disulfides connect Cys-28-Cys-71, Cys-39-Cys-60, and Cys-45-Cys-65.

This sequence belongs to the DEFL family. May form dimers. In terms of processing, not glycosylated. Post-translationally, contains 4 disulfide bonds. Met-61 and Met-63 might be oxidized in some molecules.

Its function is as follows. Probably has antifungal activity. The protein is Defensin 1 of Arachis hypogaea (Peanut).